The primary structure comprises 187 residues: Reactive Intermediate Deaminase A, chloroplastic (187 aa).

A chloroplast-targeting transit peptide spans 1 to 58 (MTWSVFRSINTPTLDLSTALRSTRTPLVAAGVGCATFAGVSLFRMSSRSPPFASLSVS). Substrate is bound at residue R165.

Belongs to the RutC family. Expressed in leaves, petiols, petals, carpels and shoot apex.

Its subcellular location is the plastid. It localises to the chloroplast. The enzyme catalyses 2-iminobutanoate + H2O = 2-oxobutanoate + NH4(+). The catalysed reaction is 2-iminopropanoate + H2O = pyruvate + NH4(+). The protein operates within amino-acid biosynthesis; L-isoleucine biosynthesis; 2-oxobutanoate from L-threonine. In terms of biological role, hydrolyzes the Ser-derived enamine/imine product of Thr dehydratase, protecting the plastidial branched-chain aminotransferase BCAT3 (AC Q9M401) from inactivation. Involved in Ile biosynthesis. This chain is Reactive Intermediate Deaminase A, chloroplastic, found in Arabidopsis thaliana (Mouse-ear cress).